The sequence spans 247 residues: Fumarate reductase iron-sulfur subunit (247 aa).

Residue tyrosine 12 participates in a menaquinone binding. A 2Fe-2S ferredoxin-type domain is found at proline 14 to arginine 94. [2Fe-2S] cluster contacts are provided by cysteine 56, cysteine 61, and cysteine 76. A 4Fe-4S ferredoxin-type domain is found at leucine 140 to leucine 169. Cysteine 149, cysteine 152, and cysteine 155 together coordinate [4Fe-4S] cluster. [3Fe-4S] cluster is bound by residues cysteine 159, cysteine 205, and cysteine 211. Residue cysteine 215 coordinates [4Fe-4S] cluster. A menaquinone is bound at residue glutamine 226–lysine 229.

Belongs to the succinate dehydrogenase/fumarate reductase iron-sulfur protein family. Fumarate dehydrogenase forms part of an enzyme complex containing four subunits: a flavoprotein, an iron-sulfur, and two hydrophobic anchor proteins. [2Fe-2S] cluster is required as a cofactor. It depends on [3Fe-4S] cluster as a cofactor. [4Fe-4S] cluster serves as cofactor.

The protein localises to the cell membrane. The catalysed reaction is a quinone + succinate = fumarate + a quinol. It carries out the reaction a menaquinone + succinate = a menaquinol + fumarate. The polypeptide is Fumarate reductase iron-sulfur subunit (frdB) (Mycobacterium tuberculosis (strain CDC 1551 / Oshkosh)).